Reading from the N-terminus, the 104-residue chain is Large ribosomal subunit protein uL24 (104 aa).

It belongs to the universal ribosomal protein uL24 family. In terms of assembly, part of the 50S ribosomal subunit.

Its function is as follows. One of two assembly initiator proteins, it binds directly to the 5'-end of the 23S rRNA, where it nucleates assembly of the 50S subunit. Functionally, one of the proteins that surrounds the polypeptide exit tunnel on the outside of the subunit. This Bartonella quintana (strain Toulouse) (Rochalimaea quintana) protein is Large ribosomal subunit protein uL24.